Reading from the N-terminus, the 515-residue chain is Protein aaim-1 (515 aa).

Positions 1–16 are cleaved as a signal peptide; it reads MRLLFFFSILYTASLC. N-linked (GlcNAc...) asparagine glycosylation is found at Asn46 and Asn127. A disordered region spans residues 248–267; the sequence is RRTDPNSKFKPRPTTSQSNG. The N-linked (GlcNAc...) asparagine glycan is linked to Asn447.

Expressed in the terminal bulb of the pharynx and the posterior of the intestine (at protein level). Expressed by intestinal cells and secreted into the intestinal lumen (at protein level).

Its subcellular location is the secreted. Functionally, plays a role in promoting resistance to bacterial pathogens such as P.aeruginosa by inhibiting bacterial intestinal colonization. In terms of biological role, (Microbial infection) Promotes infection by microsporidian pathogens such as N.parisii in the early larval stages of development. Involved in ensuring the proper orientation and location of the spore proteins of N.parisii during intestinal cell invasion. In Caenorhabditis elegans, this protein is Protein aaim-1.